The chain runs to 197 residues: FMN-dependent NADH:quinone oxidoreductase (197 aa).

An FMN-binding site is contributed by Ser-10.

The protein belongs to the azoreductase type 1 family. Homodimer. FMN serves as cofactor.

The catalysed reaction is 2 a quinone + NADH + H(+) = 2 a 1,4-benzosemiquinone + NAD(+). It catalyses the reaction N,N-dimethyl-1,4-phenylenediamine + anthranilate + 2 NAD(+) = 2-(4-dimethylaminophenyl)diazenylbenzoate + 2 NADH + 2 H(+). Functionally, quinone reductase that provides resistance to thiol-specific stress caused by electrophilic quinones. In terms of biological role, also exhibits azoreductase activity. Catalyzes the reductive cleavage of the azo bond in aromatic azo compounds to the corresponding amines. The protein is FMN-dependent NADH:quinone oxidoreductase of Mycoplasma genitalium (strain ATCC 33530 / DSM 19775 / NCTC 10195 / G37) (Mycoplasmoides genitalium).